We begin with the raw amino-acid sequence, 72 residues long: U1-sicaritoxin-Sdo1a (72 aa).

A signal peptide spans 1–24 (MMKKFTCFLLCATILCAIFCVSVA). Residues 25–41 (EKFHKMKSDIERDETPM) constitute a propeptide that is removed on maturation. 3 cysteine pairs are disulfide-bonded: Cys43–Cys61, Cys50–Cys64, and Cys60–Cys69.

As to expression, expressed by the venom gland.

It is found in the secreted. The sequence is that of U1-sicaritoxin-Sdo1a from Hexophthalma dolichocephala (Afrotropical spider).